Consider the following 277-residue polypeptide: Protein OPG166 (277 aa).

2 N-linked (GlcNAc...) asparagine; by host glycosylation sites follow: Asn29 and Asn58. 5 helical membrane-spanning segments follow: residues 124–144 (TMLM…EITY), 156–176 (GILQ…AFLF), 186–206 (IIGL…KVFS), 219–239 (LIIY…GLSL), and 247–267 (LLLS…LFLV).

It belongs to the orthopoxvirus OPG166 protein family.

The protein resides in the host membrane. In terms of biological role, promotes, when overexpressed, the influx of extracellular Ca(2+), leading to membrane permeability and host cell necrosis. The chain is Protein OPG166 (OPG166) from Bos taurus (Bovine).